A 277-amino-acid polypeptide reads, in one-letter code: Homeobox protein Nkx-6.2 (277 aa).

The segment at 89–142 (AGVYFGPAAAVARGYPKPLAELPGRPPIFWPGVVQGAPWRDPRLAGPAPAGGVL) is repressor domain. Disordered stretches follow at residues 132 to 155 (LAGPAPAGGVLDKDGKKKHSRPTF) and 210 to 250 (EMAS…DDEK). A DNA-binding region (homeobox) is located at residues 148–207 (KKHSRPTFSGQQIFALEKTFEQTKYLAGPERARLAYSLGMTESQVKVWFQNRRTKWRKRH). Residues 216–226 (KKQDSDAEKLK) show a composition bias toward basic and acidic residues.

As to expression, highest expression in brain.

It is found in the nucleus. Transcription factor with repressor activity involved in the regulation of axon-glial interactions at myelin paranodes in oligodendrocytes. Binds to the consensus DNA sequence 5'-(A/T)TTAATGA-3'. In oligodendrocytes, binds to MBP and PLP1 promoter regions. This is Homeobox protein Nkx-6.2 (NKX6-2) from Homo sapiens (Human).